We begin with the raw amino-acid sequence, 241 residues long: Uridylate kinase (241 aa).

Residue 9-10 (GS) coordinates ATP. A UMP-binding site is contributed by Gly44. The ATP site is built by Gly45 and Arg49. Residues Asp66 and 114–120 (IMPGQTT) contribute to the UMP site. Residues Thr140, Tyr146, and Asp149 each contribute to the ATP site.

Belongs to the UMP kinase family. In terms of assembly, homohexamer.

It is found in the cytoplasm. It carries out the reaction UMP + ATP = UDP + ADP. It participates in pyrimidine metabolism; CTP biosynthesis via de novo pathway; UDP from UMP (UMPK route): step 1/1. Its activity is regulated as follows. Inhibited by UTP. Functionally, catalyzes the reversible phosphorylation of UMP to UDP. The polypeptide is Uridylate kinase (Haloquadratum walsbyi (strain DSM 16790 / HBSQ001)).